Consider the following 65-residue polypeptide: Small ribosomal subunit protein bS21 (65 aa).

The tract at residues 45 to 65 (GRLKRSRSRRRAQRANEERNS) is disordered. The span at 48–57 (KRSRSRRRAQ) shows a compositional bias: basic residues.

The protein belongs to the bacterial ribosomal protein bS21 family.

The chain is Small ribosomal subunit protein bS21 from Chlorobium phaeobacteroides (strain DSM 266 / SMG 266 / 2430).